Consider the following 401-residue polypeptide: Aspartokinase (401 aa).

The protein belongs to the aspartokinase family.

The catalysed reaction is L-aspartate + ATP = 4-phospho-L-aspartate + ADP. The protein operates within amino-acid biosynthesis; L-lysine biosynthesis via DAP pathway; (S)-tetrahydrodipicolinate from L-aspartate: step 1/4. It functions in the pathway amino-acid biosynthesis; L-methionine biosynthesis via de novo pathway; L-homoserine from L-aspartate: step 1/3. Its pathway is amino-acid biosynthesis; L-threonine biosynthesis; L-threonine from L-aspartate: step 1/5. The polypeptide is Aspartokinase (lysC) (Rickettsia felis (strain ATCC VR-1525 / URRWXCal2) (Rickettsia azadi)).